A 20-amino-acid chain; its full sequence is Styelin-A (20 aa).

As to expression, hemocytes and pharyngeal tissues.

It is found in the secreted. In terms of biological role, bactericidal against several Gram-positive and Gram-negative bacteria. In Styela clava (Sea squirt), this protein is Styelin-A.